Reading from the N-terminus, the 720-residue chain is Fatty acid CoA ligase Acsl3 (720 aa).

The chain crosses the membrane as a helical; Signal-anchor for type III membrane protein span at residues 21 to 41 (ILLYFIHFIISLYTILTYIPF). Over 42 to 720 (YFLCESKQEK…ADIERMYGRK (679 aa)) the chain is Cytoplasmic. Ser683 carries the post-translational modification Phosphoserine.

Belongs to the ATP-dependent AMP-binding enzyme family. Mg(2+) is required as a cofactor.

It localises to the mitochondrion outer membrane. The protein localises to the peroxisome membrane. The protein resides in the microsome membrane. Its subcellular location is the endoplasmic reticulum membrane. It catalyses the reaction a long-chain fatty acid + ATP + CoA = a long-chain fatty acyl-CoA + AMP + diphosphate. The enzyme catalyses (E)-hexadec-2-enoate + ATP + CoA = (2E)-hexadecenoyl-CoA + AMP + diphosphate. The catalysed reaction is (5Z,8Z,11Z,14Z)-eicosatetraenoate + ATP + CoA = (5Z,8Z,11Z,14Z)-eicosatetraenoyl-CoA + AMP + diphosphate. It carries out the reaction 15-hydroxy-(5Z,8Z,11Z,13E)-eicosatetraenoate + ATP + CoA = 15-hydroxy-(5Z,8Z,11Z,13E)-eicosatetraenoyl-CoA + AMP + diphosphate. It catalyses the reaction 12-hydroxy-(5Z,8Z,10E,14Z)-eicosatetraenoate + ATP + CoA = 12-hydroxy-(5Z,8Z,10E,14Z)-eicosatetraenoyl-CoA + AMP + diphosphate. The enzyme catalyses 5-hydroxy-(6E,8Z,11Z,14Z)-eicosatetraenoate + ATP + CoA = 5-hydroxy-(6E,8Z,11Z,14Z)-eicosatetraenoyl-CoA + AMP + diphosphate. The catalysed reaction is 14,15-epoxy-(5Z,8Z,11Z)-eicosatrienoate + ATP + CoA = 14,15-epoxy-(5Z,8Z,11Z)-eicosatrienoyl-CoA + AMP + diphosphate. It carries out the reaction 11,12-epoxy-(5Z,8Z,14Z)-eicosatrienoate + ATP + CoA = 11,12-epoxy-(5Z,8Z,14Z)-eicosatrienoyl-CoA + AMP + diphosphate. It catalyses the reaction a medium-chain fatty acid + ATP + CoA = a medium-chain fatty acyl-CoA + AMP + diphosphate. The enzyme catalyses hexadecanoate + ATP + CoA = hexadecanoyl-CoA + AMP + diphosphate. The catalysed reaction is tetradecanoate + ATP + CoA = tetradecanoyl-CoA + AMP + diphosphate. It carries out the reaction dodecanoate + ATP + CoA = dodecanoyl-CoA + AMP + diphosphate. It catalyses the reaction octadecanoate + ATP + CoA = octadecanoyl-CoA + AMP + diphosphate. The enzyme catalyses eicosanoate + ATP + CoA = eicosanoyl-CoA + AMP + diphosphate. The catalysed reaction is (9Z)-octadecenoate + ATP + CoA = (9Z)-octadecenoyl-CoA + AMP + diphosphate. It carries out the reaction (9Z)-hexadecenoate + ATP + CoA = (9Z)-hexadecenoyl-CoA + AMP + diphosphate. It catalyses the reaction (9Z,12Z)-octadecadienoate + ATP + CoA = (9Z,12Z)-octadecadienoyl-CoA + AMP + diphosphate. The enzyme catalyses (9Z,12Z,15Z)-octadecatrienoate + ATP + CoA = (9Z,12Z,15Z)-octadecatrienoyl-CoA + AMP + diphosphate. The catalysed reaction is (4Z,7Z,10Z,13Z,16Z,19Z)-docosahexaenoate + ATP + CoA = (4Z,7Z,10Z,13Z,16Z,19Z)-docosahexaenoyl-CoA + AMP + diphosphate. It carries out the reaction (5Z,8Z,11Z,14Z,17Z)-eicosapentaenoate + ATP + CoA = (5Z,8Z,11Z,14Z,17Z)-eicosapentaenoyl-CoA + AMP + diphosphate. It catalyses the reaction a fatty acid + ATP + CoA = a fatty acyl-CoA + AMP + diphosphate. In terms of biological role, acyl-CoA synthetases (ACSL) activates long-chain fatty acids for both synthesis of cellular lipids, and degradation via beta-oxidation. ACSL3 is required for the incorporation of fatty acids into phosphatidylcholine, the major phospholipid located on the surface of VLDL (very low density lipoproteins). Has mainly an anabolic role in energy metabolism. Mediates hepatic lipogenesis. Preferentially uses myristate, laurate, arachidonate and eicosapentaenoate as substrates. Both isoforms exhibit the same level of activity. This Mus musculus (Mouse) protein is Fatty acid CoA ligase Acsl3.